A 371-amino-acid chain; its full sequence is Queuine tRNA-ribosyltransferase (371 aa).

Asp89 acts as the Proton acceptor in catalysis. Residues 89–93, Asp143, Gln185, and Gly212 contribute to the substrate site; that span reads DSGGF. The tract at residues 243–249 is RNA binding; that stretch reads GVGKPED. Asp262 (nucleophile) is an active-site residue. The interval 267–271 is RNA binding; important for wobble base 34 recognition; the sequence is TRNAR. 4 residues coordinate Zn(2+): Cys300, Cys302, Cys305, and His331.

Belongs to the queuine tRNA-ribosyltransferase family. In terms of assembly, homodimer. Within each dimer, one monomer is responsible for RNA recognition and catalysis, while the other monomer binds to the replacement base PreQ1. Zn(2+) is required as a cofactor.

It catalyses the reaction 7-aminomethyl-7-carbaguanine + guanosine(34) in tRNA = 7-aminomethyl-7-carbaguanosine(34) in tRNA + guanine. Its pathway is tRNA modification; tRNA-queuosine biosynthesis. Catalyzes the base-exchange of a guanine (G) residue with the queuine precursor 7-aminomethyl-7-deazaguanine (PreQ1) at position 34 (anticodon wobble position) in tRNAs with GU(N) anticodons (tRNA-Asp, -Asn, -His and -Tyr). Catalysis occurs through a double-displacement mechanism. The nucleophile active site attacks the C1' of nucleotide 34 to detach the guanine base from the RNA, forming a covalent enzyme-RNA intermediate. The proton acceptor active site deprotonates the incoming PreQ1, allowing a nucleophilic attack on the C1' of the ribose to form the product. After dissociation, two additional enzymatic reactions on the tRNA convert PreQ1 to queuine (Q), resulting in the hypermodified nucleoside queuosine (7-(((4,5-cis-dihydroxy-2-cyclopenten-1-yl)amino)methyl)-7-deazaguanosine). This is Queuine tRNA-ribosyltransferase from Pseudomonas putida (strain ATCC 47054 / DSM 6125 / CFBP 8728 / NCIMB 11950 / KT2440).